The primary structure comprises 248 residues: Stress-related protein (248 aa).

Belongs to the REF/SRPP family.

The polypeptide is Stress-related protein (SRP) (Vitis riparia (Frost grape)).